Reading from the N-terminus, the 126-residue chain is Ribonuclease VapC23 (126 aa).

The PINc domain maps to 2 to 118 (IFVDTNVFMY…GVTRIKTFDH (117 aa)). 2 residues coordinate Mg(2+): D5 and D98.

Belongs to the PINc/VapC protein family. The cofactor is Mg(2+).

In terms of biological role, toxic component of a type II toxin-antitoxin (TA) system. An RNase. The cognate antitoxin is VapB23. This chain is Ribonuclease VapC23, found in Mycobacterium tuberculosis (strain CDC 1551 / Oshkosh).